Here is a 323-residue protein sequence, read N- to C-terminus: PTS system mannose-specific EIIAB component (323 aa).

One can recognise a PTS EIIA type-4 domain in the interval 2–124 (TIAIVIGTHG…VALAVETGRE (123 aa)). Catalysis depends on histidine 10, which acts as the Tele-phosphohistidine intermediate; for EIIA activity. Residue histidine 10 is modified to Phosphohistidine; by HPr. Residue lysine 55 is modified to N6-acetyllysine. The tract at residues 137-155 (AAPAPAAAAPKAAPTPAKP) is hinge. Residues 157-320 (GPNDYMVIGL…KLKMMDLISK (164 aa)) form the PTS EIIB type-4 domain. Catalysis depends on histidine 175, which acts as the Pros-phosphohistidine intermediate; for EIIB activity. Position 175 is a phosphohistidine; by EIIA (histidine 175). Lysine 234 is subject to N6-acetyllysine.

As to quaternary structure, homodimer.

The protein localises to the cytoplasm. It localises to the cell inner membrane. The enzyme catalyses D-mannose(out) + N(pros)-phospho-L-histidyl-[protein] = D-mannose 6-phosphate(in) + L-histidyl-[protein]. The phosphoenolpyruvate-dependent sugar phosphotransferase system (sugar PTS), a major carbohydrate active transport system, catalyzes the phosphorylation of incoming sugar substrates concomitantly with their translocation across the cell membrane. The enzyme II ManXYZ PTS system is involved in mannose transport. This Escherichia coli O157:H7 protein is PTS system mannose-specific EIIAB component (manX).